A 239-amino-acid polypeptide reads, in one-letter code: Aspartate/glutamate leucyltransferase (239 aa).

Belongs to the R-transferase family. Bpt subfamily.

It is found in the cytoplasm. The catalysed reaction is N-terminal L-glutamyl-[protein] + L-leucyl-tRNA(Leu) = N-terminal L-leucyl-L-glutamyl-[protein] + tRNA(Leu) + H(+). The enzyme catalyses N-terminal L-aspartyl-[protein] + L-leucyl-tRNA(Leu) = N-terminal L-leucyl-L-aspartyl-[protein] + tRNA(Leu) + H(+). Functions in the N-end rule pathway of protein degradation where it conjugates Leu from its aminoacyl-tRNA to the N-termini of proteins containing an N-terminal aspartate or glutamate. In Campylobacter jejuni subsp. jejuni serotype O:2 (strain ATCC 700819 / NCTC 11168), this protein is Aspartate/glutamate leucyltransferase.